We begin with the raw amino-acid sequence, 304 residues long: MIHTLTLNTAIDMNMFCDPLKPSAVNRTRHTEYCPNGKGVNVSLILNHYQQPTHIIGIFGGFTGRYIVEELRQKKIKVTPAWVSEPPRINIFINDGAEEYKLVNPGAKIDDECKQQVIHHLQCVASGDYLAISGSLPPGIESRFYAEIIELCQQKRCEVILDISHPVLRQLLELRPLLIKPNDDELAGNLGLDVSNHQQVREAMRTLHQLGARNVLLTMGAELPYFSDGEGVWFCSARKIALVSSACAGDAALGAFLSKWLNKEDVAHALALASATGADVAGSAGLGKLQRTEELLQQIQVVQL.

Asp250 functions as the Proton acceptor in the catalytic mechanism.

It belongs to the carbohydrate kinase PfkB family. Mg(2+) is required as a cofactor.

The enzyme catalyses alpha-D-tagatopyranose 1-phosphate + ATP = D-tagatofuranose 1,6-bisphosphate + ADP + H(+). It participates in carbohydrate degradation. Its function is as follows. Kinase involved in a D-tagatose catabolic pathway. Catalyzes the phosphorylation of D-tagatose-1-phosphate (Tag-1P) to D-tagatose-1,6-bisphosphate. The polypeptide is D-tagatose-1-phosphate kinase (Klebsiella oxytoca).